A 425-amino-acid chain; its full sequence is UDP-N-acetylglucosamine 1-carboxyvinyltransferase (425 aa).

24-25 is a binding site for phosphoenolpyruvate; it reads KN. Arginine 95 is a UDP-N-acetyl-alpha-D-glucosamine binding site. Residue cysteine 119 is the Proton donor of the active site. Cysteine 119 bears the 2-(S-cysteinyl)pyruvic acid O-phosphothioketal mark. Residues 124–128, aspartate 308, and valine 330 each bind UDP-N-acetyl-alpha-D-glucosamine; that span reads RPVDQ.

The protein belongs to the EPSP synthase family. MurA subfamily.

The protein resides in the cytoplasm. It catalyses the reaction phosphoenolpyruvate + UDP-N-acetyl-alpha-D-glucosamine = UDP-N-acetyl-3-O-(1-carboxyvinyl)-alpha-D-glucosamine + phosphate. Its pathway is cell wall biogenesis; peptidoglycan biosynthesis. Functionally, cell wall formation. Adds enolpyruvyl to UDP-N-acetylglucosamine. This is UDP-N-acetylglucosamine 1-carboxyvinyltransferase from Deinococcus deserti (strain DSM 17065 / CIP 109153 / LMG 22923 / VCD115).